Consider the following 146-residue polypeptide: Anti-sigma F factor (146 aa).

This sequence belongs to the anti-sigma-factor family.

The catalysed reaction is L-seryl-[protein] + ATP = O-phospho-L-seryl-[protein] + ADP + H(+). It catalyses the reaction L-threonyl-[protein] + ATP = O-phospho-L-threonyl-[protein] + ADP + H(+). In terms of biological role, binds to sigma F and blocks its ability to form an RNA polymerase holoenzyme (E-sigma F). Phosphorylates SpoIIAA on a serine residue. This phosphorylation may enable SpoIIAA to act as an anti-anti-sigma factor that counteracts SpoIIAB and thus releases sigma F from inhibition. The chain is Anti-sigma F factor from Geobacillus thermodenitrificans (strain NG80-2).